The chain runs to 470 residues: UDP-N-acetylmuramate--L-alanine ligase (470 aa).

Residue 118–124 participates in ATP binding; that stretch reads GTHGKTT.

The protein belongs to the MurCDEF family.

The protein localises to the cytoplasm. It catalyses the reaction UDP-N-acetyl-alpha-D-muramate + L-alanine + ATP = UDP-N-acetyl-alpha-D-muramoyl-L-alanine + ADP + phosphate + H(+). It participates in cell wall biogenesis; peptidoglycan biosynthesis. In terms of biological role, cell wall formation. The chain is UDP-N-acetylmuramate--L-alanine ligase from Cereibacter sphaeroides (strain KD131 / KCTC 12085) (Rhodobacter sphaeroides).